Reading from the N-terminus, the 417-residue chain is Monooxygenase cfoF (417 aa).

FAD contacts are provided by residues 45 to 48, Arg126, and Asp327; that span reads DRDK. Residues 389 to 399 are compositionally biased toward basic and acidic residues; the sequence is AHTTQLDRDQF. Residues 389 to 417 are disordered; that stretch reads AHTTQLDRDQFTDGSGANDFLVGQQHSDK.

It belongs to the aromatic-ring hydroxylase family. KMO subfamily. It depends on FAD as a cofactor.

It participates in secondary metabolite biosynthesis; flavonoid biosynthesis. Functionally, monooxygenase; part of the gene cluster that mediates the biosynthesis of chlorflavonin, a fungal flavonoid with acetolactate synthase inhibitory activity. Within the pathway, cfoF is responsible for the hydroxylation of the flavonoid skeleton at position C3. The pathway begins with the PKS-NRPS hybrid synthetase cfoA that uses benzoic acid or p-hydroxybenzoic acid as a starter unit with four rounds of chain elongation using malonyl-CoA to form the chalcone skeleton. Then, a new type of chalcone isomerase, cfoK, catalyzes the conversion of the chalcone into a flavanone by a histidine-mediated oxa-Michael addition mechanism. The desaturation of flavanone to flavone is catalyzed by a new type of flavone synthase, the flavin mononucleotide (FMN)-dependent oxidoreductase cfoJ. Monooxygenases cfoF, cfoG, and P450 cfoH are responsible for the hydroxylation of the flavonoid skeleton at sites C3, C8, and C2', respectively. Like cfoF, the dehydratase cfoI plays also a role in the hydroxylation of position C3. Methyltransferases cfoB, cfoC, and cfoD then catalyze the methylation of C7-OH, C8-OH, and C3-OH, respectively. Finally, the monooxygenase cfoE is responsible for the chlorination of flavonoid at position C3'. The polypeptide is Monooxygenase cfoF (Aspergillus candidus).